A 312-amino-acid chain; its full sequence is Glyoxylate/hydroxypyruvate reductase A (312 aa).

Arginine 227 is an active-site residue. Residue histidine 275 is the Proton donor of the active site.

It belongs to the D-isomer specific 2-hydroxyacid dehydrogenase family. GhrA subfamily.

The protein resides in the cytoplasm. It catalyses the reaction glycolate + NADP(+) = glyoxylate + NADPH + H(+). The catalysed reaction is (R)-glycerate + NAD(+) = 3-hydroxypyruvate + NADH + H(+). The enzyme catalyses (R)-glycerate + NADP(+) = 3-hydroxypyruvate + NADPH + H(+). Functionally, catalyzes the NADPH-dependent reduction of glyoxylate and hydroxypyruvate into glycolate and glycerate, respectively. This chain is Glyoxylate/hydroxypyruvate reductase A, found in Enterobacter sp. (strain 638).